The chain runs to 214 residues: Small ribosomal subunit protein uS2 (214 aa).

The protein belongs to the universal ribosomal protein uS2 family.

This chain is Small ribosomal subunit protein uS2, found in Thermofilum pendens (strain DSM 2475 / Hrk 5).